The chain runs to 146 residues: L-fucose mutarotase (146 aa).

His22 functions as the Proton donor in the catalytic mechanism. Residues Asp30, Arg109, and Tyr131–Asn133 each bind substrate.

It belongs to the RbsD / FucU family. FucU mutarotase subfamily. As to quaternary structure, homodecamer.

It is found in the cytoplasm. The catalysed reaction is alpha-L-fucose = beta-L-fucose. It functions in the pathway carbohydrate metabolism; L-fucose metabolism. Functionally, involved in the anomeric conversion of L-fucose. In Glaesserella parasuis serovar 5 (strain SH0165) (Haemophilus parasuis), this protein is L-fucose mutarotase.